A 345-amino-acid polypeptide reads, in one-letter code: Ribosome production factor 1 (345 aa).

2 disordered regions span residues 1-57 (MAKA…ISEI) and 70-105 (WKQQQRKEKLAAKKKLKREREALGDKAPPKPVPKTI). Over residues 87–97 (REREALGDKAP) the composition is skewed to basic and acidic residues. One can recognise a Brix domain in the interval 142–325 (PKILITTSDR…LRSLQKGTFD (184 aa)). Positions 303–320 (VGIQELGPRFTLKLRSLQ) are RNA-binding.

The protein resides in the nucleus. It is found in the nucleolus. Functionally, may be required for ribosome biogenesis. The polypeptide is Ribosome production factor 1 (Rpf1) (Rattus norvegicus (Rat)).